Consider the following 452-residue polypeptide: Pup--protein ligase (452 aa).

Glutamate 9 contributes to the Mg(2+) binding site. Arginine 53 is an ATP binding site. Tyrosine 55 serves as a coordination point for Mg(2+). Aspartate 57 (proton acceptor) is an active-site residue. A Mg(2+)-binding site is contributed by glutamate 63. ATP contacts are provided by threonine 66 and tryptophan 419.

This sequence belongs to the Pup ligase/Pup deamidase family. Pup-conjugating enzyme subfamily.

The catalysed reaction is ATP + [prokaryotic ubiquitin-like protein]-L-glutamate + [protein]-L-lysine = ADP + phosphate + N(6)-([prokaryotic ubiquitin-like protein]-gamma-L-glutamyl)-[protein]-L-lysine.. Its pathway is protein degradation; proteasomal Pup-dependent pathway. It functions in the pathway protein modification; protein pupylation. Catalyzes the covalent attachment of the prokaryotic ubiquitin-like protein modifier Pup to the proteasomal substrate proteins, thereby targeting them for proteasomal degradation. This tagging system is termed pupylation. The ligation reaction involves the side-chain carboxylate of the C-terminal glutamate of Pup and the side-chain amino group of a substrate lysine. This chain is Pup--protein ligase, found in Parafrankia sp. (strain EAN1pec).